Reading from the N-terminus, the 364-residue chain is DNA replication and repair protein RecF (364 aa).

Residue 30–37 (GANGSGKT) participates in ATP binding.

Belongs to the RecF family.

The protein localises to the cytoplasm. In terms of biological role, the RecF protein is involved in DNA metabolism; it is required for DNA replication and normal SOS inducibility. RecF binds preferentially to single-stranded, linear DNA. It also seems to bind ATP. This Sodalis glossinidius protein is DNA replication and repair protein RecF.